The primary structure comprises 119 residues: Large ribosomal subunit protein bL19 (119 aa).

The protein belongs to the bacterial ribosomal protein bL19 family.

Functionally, this protein is located at the 30S-50S ribosomal subunit interface and may play a role in the structure and function of the aminoacyl-tRNA binding site. In Pseudoalteromonas translucida (strain TAC 125), this protein is Large ribosomal subunit protein bL19.